Here is a 232-residue protein sequence, read N- to C-terminus: Phosphatidylserine decarboxylase proenzyme (232 aa).

S190 (schiff-base intermediate with substrate; via pyruvic acid) is an active-site residue. Position 190 is a pyruvic acid (Ser); by autocatalysis (S190).

It belongs to the phosphatidylserine decarboxylase family. PSD-A subfamily. In terms of assembly, heterodimer of a large membrane-associated beta subunit and a small pyruvoyl-containing alpha subunit. The cofactor is pyruvate. In terms of processing, is synthesized initially as an inactive proenzyme. Formation of the active enzyme involves a self-maturation process in which the active site pyruvoyl group is generated from an internal serine residue via an autocatalytic post-translational modification. Two non-identical subunits are generated from the proenzyme in this reaction, and the pyruvate is formed at the N-terminus of the alpha chain, which is derived from the carboxyl end of the proenzyme. The post-translation cleavage follows an unusual pathway, termed non-hydrolytic serinolysis, in which the side chain hydroxyl group of the serine supplies its oxygen atom to form the C-terminus of the beta chain, while the remainder of the serine residue undergoes an oxidative deamination to produce ammonia and the pyruvoyl prosthetic group on the alpha chain.

The protein resides in the cell membrane. The enzyme catalyses a 1,2-diacyl-sn-glycero-3-phospho-L-serine + H(+) = a 1,2-diacyl-sn-glycero-3-phosphoethanolamine + CO2. It participates in phospholipid metabolism; phosphatidylethanolamine biosynthesis; phosphatidylethanolamine from CDP-diacylglycerol: step 2/2. In terms of biological role, catalyzes the formation of phosphatidylethanolamine (PtdEtn) from phosphatidylserine (PtdSer). Important for establishment of root nodule symbiosis with the host plant. The chain is Phosphatidylserine decarboxylase proenzyme from Rhizobium meliloti (strain 1021) (Ensifer meliloti).